Reading from the N-terminus, the 410-residue chain is MNFDTLKIADPEIYEVIQKETKRQRGNIELIASENFVTEAVMEAMGSQLTNKYAEGYPGKRYYGGCEEVDVAEDLARDRLKKLFNAEHANVQPHSGANANIGVYFAILKPGDTVLGMNLSHGGHLTHGSPVNISGTYYNFVDYGVDKETHLINYEEVRRIANEIKPKLIVAGASAFPRKIDFKKFREIADEVGAYLMVDMAHIAGLVAAGLHENPCDYADFVTTTTHKTLRGPRGGAILCKEKYAKMIDKAIFPGLQGGPLMHVIAAKAVSFKEALSPEFKAYQEQVIKNAAKLGEELKSRGFNLVSGGTDNHLLLLDLRNKNITGKDAEKLLDEVGVTVNKNTIPYDPESPFVTSGIRIGTPAVTTRGMKEDDMVTIAEIIGTIIDHPERIDEVSSMVKNLCEKFKLYE.

Residues leucine 119 and 123-125 (GHL) each bind (6S)-5,6,7,8-tetrahydrofolate. The residue at position 228 (lysine 228) is an N6-(pyridoxal phosphate)lysine. 351 to 353 (SPF) provides a ligand contact to (6S)-5,6,7,8-tetrahydrofolate.

This sequence belongs to the SHMT family. In terms of assembly, homodimer. Pyridoxal 5'-phosphate is required as a cofactor.

Its subcellular location is the cytoplasm. The catalysed reaction is (6R)-5,10-methylene-5,6,7,8-tetrahydrofolate + glycine + H2O = (6S)-5,6,7,8-tetrahydrofolate + L-serine. The protein operates within one-carbon metabolism; tetrahydrofolate interconversion. Its pathway is amino-acid biosynthesis; glycine biosynthesis; glycine from L-serine: step 1/1. In terms of biological role, catalyzes the reversible interconversion of serine and glycine with tetrahydrofolate (THF) serving as the one-carbon carrier. This reaction serves as the major source of one-carbon groups required for the biosynthesis of purines, thymidylate, methionine, and other important biomolecules. Also exhibits THF-independent aldolase activity toward beta-hydroxyamino acids, producing glycine and aldehydes, via a retro-aldol mechanism. This Alkaliphilus oremlandii (strain OhILAs) (Clostridium oremlandii (strain OhILAs)) protein is Serine hydroxymethyltransferase.